The following is a 558-amino-acid chain: Arginine--tRNA ligase (558 aa).

The short motif at A116 to H126 is the 'HIGH' region element.

The protein belongs to the class-I aminoacyl-tRNA synthetase family.

It localises to the cytoplasm. It catalyses the reaction tRNA(Arg) + L-arginine + ATP = L-arginyl-tRNA(Arg) + AMP + diphosphate. In Methanocorpusculum labreanum (strain ATCC 43576 / DSM 4855 / Z), this protein is Arginine--tRNA ligase.